Consider the following 1830-residue polypeptide: Urea amidolyase (1830 aa).

ATP contacts are provided by residues 115-122 (GAIVIGKT), lysine 740, glutamate 823, and asparagine 858. The 444-residue stretch at 625-1068 (PFETVLIANR…ATKILDSYDY (444 aa)) folds into the Biotin carboxylation domain. Residues 744 to 941 (REIAEKAGVP…LVEWMLRIAA (198 aa)) enclose the ATP-grasp domain. Residues 1752–1830 (AVEEEYPEDA…DAGDLVAVIQ (79 aa)) form the Biotinyl-binding domain. An N6-biotinyllysine modification is found at lysine 1796.

The protein belongs to the DUR1,2 family. In terms of assembly, monomer. It depends on biotin as a cofactor.

It carries out the reaction urea + hydrogencarbonate + ATP = urea-1-carboxylate + ADP + phosphate + H(+). It catalyses the reaction urea-1-carboxylate + H2O + 3 H(+) = 2 NH4(+) + 2 CO2. It participates in nitrogen metabolism; urea degradation; CO(2) and NH(3) from urea (allophanate route): step 1/2. It functions in the pathway nitrogen metabolism; urea degradation; CO(2) and NH(3) from urea (allophanate route): step 2/2. Functionally, involved in uracil catabolism. Hydrolysis of urea to ammonia and CO(2). In Lachancea kluyveri (Yeast), this protein is Urea amidolyase (DUR1,2).